Reading from the N-terminus, the 385-residue chain is Odorant receptor 82a (385 aa).

Residues 1–32 (MGRLFQLQEYCLRAMGHKDDMDSTDSTALSLK) lie on the Cytoplasmic side of the membrane. A helical membrane pass occupies residues 33 to 53 (HISSLIFVISAQYPLISYVAY). Over 54–62 (NRNDMEKVT) the chain is Extracellular. The chain crosses the membrane as a helical span at residues 63 to 83 (ACLSVVFTNMLTVIKISTFLA). Over 84–131 (NRKDFWEMIHRFRKMHEQSASHIPRYREGLDYVAEANKLASFLGRAYC) the chain is Cytoplasmic. A helical transmembrane segment spans residues 132–152 (VSCGLTGLYFMLGPIVKIGVC). The Extracellular segment spans residues 153–186 (RWHGTTCDKELPMPMKFPFNDLESPGYEVCFLYT). A helical transmembrane segment spans residues 187 to 207 (VLVTVVVVAYASAVDGLFISF). Over 208–257 (AINLRAHFQTLQRQIENWEFPSSEPDTQIRLKSIVEYHVLLLSLSRKLRS) the chain is Cytoplasmic. The chain crosses the membrane as a helical span at residues 258–278 (IYTPTVMGQFVITSLQVGVII). The Extracellular segment spans residues 279-290 (YQLVTNMDSVMD). The helical transmembrane segment at 291–311 (LLLYASFFGSIMLQLFIYCYG) threads the bilayer. Topologically, residues 312–357 (GEIIKAESLQVDTAVRLSNWHLASPKTRTSLSLIILQSQKEVLIRA) are cytoplasmic. Residues 358–378 (GFFVASLANFVGICRTALSLI) traverse the membrane as a helical segment. At 379–385 (TLIKSIE) the chain is on the extracellular side.

The protein belongs to the insect chemoreceptor superfamily. Heteromeric odorant receptor channel (TC 1.A.69) family. Or1a subfamily. In terms of assembly, interacts with Orco. Complexes exist early in the endomembrane system in olfactory sensory neurons (OSNs), coupling these complexes to the conserved ciliary trafficking pathway. Expressed in olfactory sensory neurons in the antenna.

It localises to the cell membrane. Odorant receptor which mediates acceptance or avoidance behavior, depending on its substrates. The odorant receptor repertoire encodes a large collection of odor stimuli that vary widely in identity, intensity, and duration. May form a complex with Orco to form odorant-sensing units, providing sensitive and prolonged odorant signaling and calcium permeability. The sequence is that of Odorant receptor 82a (Or82a) from Drosophila melanogaster (Fruit fly).